A 105-amino-acid chain; its full sequence is Large ribosomal subunit protein uL24 (105 aa).

The protein belongs to the universal ribosomal protein uL24 family. In terms of assembly, part of the 50S ribosomal subunit.

One of two assembly initiator proteins, it binds directly to the 5'-end of the 23S rRNA, where it nucleates assembly of the 50S subunit. Functionally, one of the proteins that surrounds the polypeptide exit tunnel on the outside of the subunit. This is Large ribosomal subunit protein uL24 from Nitrosomonas europaea (strain ATCC 19718 / CIP 103999 / KCTC 2705 / NBRC 14298).